A 156-amino-acid polypeptide reads, in one-letter code: Transcription elongation factor GreA (156 aa).

Residues 7–27 are a coiled coil; it reads MTQEGLDKLKLELENLKLVKR.

The protein belongs to the GreA/GreB family.

In terms of biological role, necessary for efficient RNA polymerase transcription elongation past template-encoded arresting sites. The arresting sites in DNA have the property of trapping a certain fraction of elongating RNA polymerases that pass through, resulting in locked ternary complexes. Cleavage of the nascent transcript by cleavage factors such as GreA or GreB allows the resumption of elongation from the new 3'terminus. GreA releases sequences of 2 to 3 nucleotides. In Lactococcus lactis subsp. lactis (strain IL1403) (Streptococcus lactis), this protein is Transcription elongation factor GreA.